A 600-amino-acid chain; its full sequence is Methionine--tRNA ligase (600 aa).

The short motif at 11 to 21 (PYANGPRHIGH) is the 'HIGH' region element. Zn(2+)-binding residues include Cys-143, Cys-146, Cys-156, and Cys-159. A 'KMSKS' region motif is present at residues 350 to 354 (QFSSS). Ser-353 lines the ATP pocket.

Belongs to the class-I aminoacyl-tRNA synthetase family. MetG type 1 subfamily. Monomer. Zn(2+) serves as cofactor.

It localises to the cytoplasm. It carries out the reaction tRNA(Met) + L-methionine + ATP = L-methionyl-tRNA(Met) + AMP + diphosphate. Is required not only for elongation of protein synthesis but also for the initiation of all mRNA translation through initiator tRNA(fMet) aminoacylation. This chain is Methionine--tRNA ligase, found in Kineococcus radiotolerans (strain ATCC BAA-149 / DSM 14245 / SRS30216).